A 465-amino-acid polypeptide reads, in one-letter code: MSQGKIVQIIGAVVDVEFPRDMIPRVYDALKLDENGLTLEVQQLLGDGVVRTIAMGSSDGLKRGMTVSNTGSPITVPVGKGTLGRIVDVLGTPVDEAGPIDTDKSRAIHQAAPKFDELSSTTELLETGIKVIDLLCPFAKGGKVGLFGGAGVGKTVNMMELINNIAKAHSGLSVFSGVGERTREGNDFYHEMKDSNVLDKVAMVYGQMNEPPGNRLRVALTGLTMAEYFRDEKDENGKGRDVLFFVDNIYRYTLAGTEVSALLGRMPSAVGYQPTLAEEMGRLQERITSTQTGSITSIQAVYVPADDLTDPSPATTFAHLDATVVLSRDIASLGIYPAVDPLDSTSRQLDPMVLGQEHYDVARGVQSTLQKYKELRDIIAILGMDELSDEDKLAVMRARKIQRFLSQPFHVAEVFTGSPGKYVALRDTIAGFKAILNGEYDHLPEQAFYMVGSIEEAVEKAKTLN.

Position 148–155 (148–155) interacts with ATP; the sequence is GGAGVGKT.

The protein belongs to the ATPase alpha/beta chains family. F-type ATPases have 2 components, CF(1) - the catalytic core - and CF(0) - the membrane proton channel. CF(1) has five subunits: alpha(3), beta(3), gamma(1), delta(1), epsilon(1). CF(0) has three main subunits: a(1), b(2) and c(9-12). The alpha and beta chains form an alternating ring which encloses part of the gamma chain. CF(1) is attached to CF(0) by a central stalk formed by the gamma and epsilon chains, while a peripheral stalk is formed by the delta and b chains.

Its subcellular location is the cell inner membrane. It catalyses the reaction ATP + H2O + 4 H(+)(in) = ADP + phosphate + 5 H(+)(out). Functionally, produces ATP from ADP in the presence of a proton gradient across the membrane. The catalytic sites are hosted primarily by the beta subunits. The chain is ATP synthase subunit beta from Neisseria gonorrhoeae (strain ATCC 700825 / FA 1090).